Here is a 664-residue protein sequence, read N- to C-terminus: ATP synthase subunit alpha 2 (664 aa).

180–187 (GDRATGKT) is an ATP binding site. The interval 525–664 (MPAEDAAGDI…DAEAEARHKR (140 aa)) is disordered. The segment covering 543–588 (ARGDADRDADHGANREVSREVSPEASREVSREVSCEVSHEADRDAA) has biased composition (basic and acidic residues). Over residues 589–599 (ADAARVAGRAP) the composition is skewed to low complexity. Residues 621–639 (ADGDRASASRPRPDARGDA) show a composition bias toward basic and acidic residues.

The protein belongs to the ATPase alpha/beta chains family. In terms of assembly, F-type ATPases have 2 components, CF(1) - the catalytic core - and CF(0) - the membrane proton channel. CF(1) has five subunits: alpha(3), beta(3), gamma(1), delta(1), epsilon(1). CF(0) has three main subunits: a(1), b(2) and c(9-12). The alpha and beta chains form an alternating ring which encloses part of the gamma chain. CF(1) is attached to CF(0) by a central stalk formed by the gamma and epsilon chains, while a peripheral stalk is formed by the delta and b chains.

Its subcellular location is the cell inner membrane. It catalyses the reaction ATP + H2O + 4 H(+)(in) = ADP + phosphate + 5 H(+)(out). Produces ATP from ADP in the presence of a proton gradient across the membrane. The alpha chain is a regulatory subunit. The protein is ATP synthase subunit alpha 2 of Burkholderia pseudomallei (strain 1710b).